The chain runs to 176 residues: Parathyroid hormone-related protein (176 aa).

The signal sequence occupies residues Met1 to Gly25. The propeptide occupies Arg26 to Arg37. The interval Arg58–Asn69 is important for receptor binding. Residues Thr76–Asn157 form a disordered region. 2 stretches are compositionally biased toward polar residues: residues Ser77–Asn91 and Thr106–Lys116. A Nuclear localization signal motif is present at residues Thr109 to Lys130. Positions Ser123–Lys133 are enriched in basic residues.

The protein belongs to the parathyroid hormone family.

It is found in the secreted. Its subcellular location is the cytoplasm. It localises to the nucleus. Functionally, neuroendocrine peptide which is a critical regulator of cellular and organ growth, development, migration, differentiation and survival and of epithelial calcium ion transport. Acts by binding to its receptor, PTH1R, activating G protein-coupled receptor signaling. Regulates endochondral bone development and epithelial-mesenchymal interactions during the formation of the mammary glands and teeth. Required for skeletal homeostasis. Its function is as follows. Potent inhibitor of osteoclastic bone resorption. In Gallus gallus (Chicken), this protein is Parathyroid hormone-related protein (PTHLH).